A 168-amino-acid chain; its full sequence is Transcription elongation factor GreB (168 aa).

Residues 61–84 (KKMLREIDSRVRFLRKRLENLKVV) adopt a coiled-coil conformation.

Belongs to the GreA/GreB family. GreB subfamily.

Functionally, necessary for efficient RNA polymerase transcription elongation past template-encoded arresting sites. The arresting sites in DNA have the property of trapping a certain fraction of elongating RNA polymerases that pass through, resulting in locked ternary complexes. Cleavage of the nascent transcript by cleavage factors such as GreA or GreB allows the resumption of elongation from the new 3'terminus. GreB releases sequences of up to 9 nucleotides in length. This Pseudomonas aeruginosa (strain ATCC 15692 / DSM 22644 / CIP 104116 / JCM 14847 / LMG 12228 / 1C / PRS 101 / PAO1) protein is Transcription elongation factor GreB.